The primary structure comprises 299 residues: ATP phosphoribosyltransferase (299 aa).

This sequence belongs to the ATP phosphoribosyltransferase family. Long subfamily. In terms of assembly, equilibrium between an active dimeric form, an inactive hexameric form and higher aggregates. Interconversion between the various forms is largely reversible and is influenced by the natural substrates and inhibitors of the enzyme. Mg(2+) is required as a cofactor.

Its subcellular location is the cytoplasm. It carries out the reaction 1-(5-phospho-beta-D-ribosyl)-ATP + diphosphate = 5-phospho-alpha-D-ribose 1-diphosphate + ATP. It functions in the pathway amino-acid biosynthesis; L-histidine biosynthesis; L-histidine from 5-phospho-alpha-D-ribose 1-diphosphate: step 1/9. Feedback inhibited by histidine. Its function is as follows. Catalyzes the condensation of ATP and 5-phosphoribose 1-diphosphate to form N'-(5'-phosphoribosyl)-ATP (PR-ATP). Has a crucial role in the pathway because the rate of histidine biosynthesis seems to be controlled primarily by regulation of HisG enzymatic activity. This is ATP phosphoribosyltransferase from Buchnera aphidicola subsp. Baizongia pistaciae (strain Bp).